The chain runs to 352 residues: Anthranilate phosphoribosyltransferase (352 aa).

5-phospho-alpha-D-ribose 1-diphosphate contacts are provided by residues Gly96, 99–100 (GS), Ser104, 106–109 (NIST), 124–132 (KHGNRSVSS), and Ser136. Residue Gly96 coordinates anthranilate. Residue Ser108 coordinates Mg(2+). Asn127 serves as a coordination point for anthranilate. Arg182 lines the anthranilate pocket. Mg(2+) contacts are provided by Asp241 and Glu242.

Belongs to the anthranilate phosphoribosyltransferase family. As to quaternary structure, homodimer. Requires Mg(2+) as cofactor.

It carries out the reaction N-(5-phospho-beta-D-ribosyl)anthranilate + diphosphate = 5-phospho-alpha-D-ribose 1-diphosphate + anthranilate. The protein operates within amino-acid biosynthesis; L-tryptophan biosynthesis; L-tryptophan from chorismate: step 2/5. Functionally, catalyzes the transfer of the phosphoribosyl group of 5-phosphorylribose-1-pyrophosphate (PRPP) to anthranilate to yield N-(5'-phosphoribosyl)-anthranilate (PRA). This is Anthranilate phosphoribosyltransferase from Syntrophotalea carbinolica (strain DSM 2380 / NBRC 103641 / GraBd1) (Pelobacter carbinolicus).